Reading from the N-terminus, the 1055-residue chain is Ubiquitin carboxyl-terminal hydrolase 25 (1055 aa).

Residues 14 to 57 (QKHQQTFLNQLREITGINDTQILQQALKDSNGNLELAVAFLTAK) form the UBA-like domain. The segment at 77–102 (NDRYISVGSQADTNVIDLTGDDKDDL) is SUMO interaction domain (SIM). S85 is modified (phosphoserine). The Required for SUMO paralog-specific binding motif lies at 89 to 95 (TNVIDLT). UIM domains lie at 97–116 (DDKD…SNRA) and 123–140 (TDEE…IAEN). K99 participates in a covalent cross-link: Glycyl lysine isopeptide (Lys-Gly) (interchain with G-Cter in SUMO); alternate. K99 is covalently cross-linked (Glycyl lysine isopeptide (Lys-Gly) (interchain with G-Cter in ubiquitin); alternate). The 489-residue stretch at 169–657 (VGLKNVGNTC…SAYCLMYIND (489 aa)) folds into the USP domain. Residue C178 is part of the active site. A disordered region spans residues 464–507 (VCTSPVDDIDASSPPSGSIPSQTLPSTTEQQGALSSELPSTSPS). A compositionally biased stretch (polar residues) spans 476–496 (SPPSGSIPSQTLPSTTEQQGA). The span at 497-507 (LSSELPSTSPS) shows a compositional bias: low complexity. Residues 541–578 (TEEELSVLESCLHRWRTEIENDTRDLQESISRIHRTIE) are a coiled coil. Residues H599 and H607 contribute to the active site. The stretch at 684–717 (DLRDFVEEDNQRFEKELEEWDAQLAQKALQEKLL) forms a coiled coil. The segment at 727–749 (TSVTTAQAAGDPEYLEQPSRSDF) is disordered. Phosphotyrosine is present on Y740.

Belongs to the peptidase C19 family. As to quaternary structure, homotetramer, inhibited form. Homodimer, active form. Interacts with ACTA1 (via its C-terminus); the interaction occurs for all isoforms but is strongest for isoform USP25m in muscle differentiating cells. Interacts (isoform USP25m only) with MYBPC1; the interaction prevents proteasomal degradation of MYBPC1. Interacts (isoform USP25m only) with FLNC (via filament repeats 17-18, 20-21 and 24). Interacts with GAPDH. Interacts with SUMO3; the interaction sumoylates efficiently USP25. Interacts with SUMO2; the interaction sumoylates efficiently USP25. Interacts with SUMO1; the interaction only weakly sumoylates USP25. Interacts with SYK; phosphorylates USP25 and regulates USP25 intracellular levels. Acetylated. In terms of processing, sumoylation impairs binding to and hydrolysis of ubiquitin chains. Sumoylated preferentially with SUMO2 or SUMO3. Desumoylated by SENP1. Polyubiquitinated by SMURF1 by promoting the 'Lys-48'-linkage leading to proteasomal degradation. Post-translationally, preferentially monoubiquitinated but can also be polyubiquitinated. Autodeubiquitinated. Ubiquitination activates the enzymatic activity either by preventing sumoylation or by allowing novel interactions. Phosphorylation in the C-terminal by SYK regulates USP25 cellular levels. In terms of tissue distribution, isoform USP25a is found in most adult and fetal tissues; expression is moderately high in testis, pancreas, kidney, skeletal muscle, liver, lung, placenta, heart, but very low in peripheral blood, colon, small intestine, ovary, prostate, thymus and spleen. Expressed in the brain, with high levels in the cerebral cortex. Isoform USP25b is found in all tissues except heart and skeletal muscle. Isoform USP25m is heart and skeletal muscle specific.

Its subcellular location is the cytoplasm. It is found in the nucleus. It carries out the reaction Thiol-dependent hydrolysis of ester, thioester, amide, peptide and isopeptide bonds formed by the C-terminal Gly of ubiquitin (a 76-residue protein attached to proteins as an intracellular targeting signal).. Deubiquitinating enzyme that hydrolyzes ubiquitin moieties conjugated to substrates and thus, functions in various biological processes including inflammation and immune response. Modulates the Wnt/beta-catenin pathway by deubiquitinating and stabilizing tankyrases TNKS1 and TNKS2. Regulates KEAP1-NRF2 axis in the defense against oxidative assaults by deubiquitinating KEAP1 and protecting it from degradation leading to degradation of the NRF2 transcription factor that is responsible for mounting an anti-oxidation gene expression program. Positively regulates RNA virus-induced innate signaling by interacting with and deubiquitinating ERLIN1 and ERLIN2. In turn, restricts virus production by regulating cholesterol biosynthetic flux. Acts as a negative regulator of interleukin-17-mediated signaling and inflammation through the removal of 'Lys-63'-linked ubiquitination of TRAF5 and TRAF6. Prevents the ubiquitination and degradation of TRAF3 to reduce the phosphorylation levels of JNK and P38, the secretion of IL-1B and to induce endotoxin tolerance. Its function is as follows. The muscle-specific isoform (USP25m) may have a role in the regulation of muscular differentiation and function. In Homo sapiens (Human), this protein is Ubiquitin carboxyl-terminal hydrolase 25 (USP25).